A 334-amino-acid polypeptide reads, in one-letter code: ADP-L-glycero-D-manno-heptose-6-epimerase (334 aa).

Residues 11 to 12, 32 to 33, Lys-39, Lys-54, 77 to 81, and Asn-94 each bind NADP(+); these read FI, DN, and QGACS. Residue Tyr-141 is the Proton acceptor of the active site. NADP(+) is bound at residue Lys-145. Asn-171 lines the substrate pocket. 2 residues coordinate NADP(+): Val-172 and Lys-180. Residue Lys-180 is the Proton acceptor of the active site. Substrate-binding positions include Arg-182, His-189, 203–206, Arg-216, and Tyr-295; that span reads FGSN.

The protein belongs to the NAD(P)-dependent epimerase/dehydratase family. HldD subfamily. Homopentamer. The cofactor is NADP(+).

It catalyses the reaction ADP-D-glycero-beta-D-manno-heptose = ADP-L-glycero-beta-D-manno-heptose. It participates in nucleotide-sugar biosynthesis; ADP-L-glycero-beta-D-manno-heptose biosynthesis; ADP-L-glycero-beta-D-manno-heptose from D-glycero-beta-D-manno-heptose 7-phosphate: step 4/4. Its function is as follows. Catalyzes the interconversion between ADP-D-glycero-beta-D-manno-heptose and ADP-L-glycero-beta-D-manno-heptose via an epimerization at carbon 6 of the heptose. This Neisseria gonorrhoeae (strain ATCC 700825 / FA 1090) protein is ADP-L-glycero-D-manno-heptose-6-epimerase.